Reading from the N-terminus, the 561-residue chain is Excitatory amino acid transporter 4 (561 aa).

Over 1-52 (MSSHGNSLFLRESGAGGGCLQGLQDSLQQRALRTRLRLQTMTREHVRRFLRR) the chain is Cytoplasmic. At Ser-2 the chain carries Phosphoserine. 3 helical membrane passes run 53-73 (NAFI…AFAL), 96-116 (MLQM…MASL), and 130-150 (VYYM…VTII). 3 N-linked (GlcNAc...) asparagine glycosylation sites follow: Asn-213, Asn-229, and Asn-236. The next 3 membrane-spanning stretches (helical) occupy residues 259–282 (SANG…IGGM), 292–319 (FFDS…LFLI), and 341–362 (LTVI…YFLV). Positions 368–398 (FPFIGGMLQALITAMGTSSSSATLPITFRCL) form an intramembrane region, discontinuously helical. 385 to 387 (SSS) is an L-aspartate binding site. Residues 408–434 (ITRFVLPVGATVNMDGTALYEALAAIF) form a helical membrane-spanning segment. Residues Gly-416, Thr-418, and Asn-420 each coordinate Na(+). L-aspartate-binding positions include Thr-424, 465–469 (IPQAG), Asp-498, and Asn-505. An intramembrane region (discontinuously helical) is located at residues 448–481 (ITTISITATAASVGAAGIPQAGLVTMVIVLTSVG). A helical transmembrane segment spans residues 495–516 (WFLDRLRTMTNVLGDSIGAAVI). 2 residues coordinate Na(+): Asn-505 and Asp-509.

Belongs to the dicarboxylate/amino acid:cation symporter (DAACS) (TC 2.A.23) family. SLC1A6 subfamily. In terms of assembly, homotrimer. As to expression, brain specific.

The protein localises to the cell membrane. It carries out the reaction K(+)(in) + L-glutamate(out) + 3 Na(+)(out) + H(+)(out) = K(+)(out) + L-glutamate(in) + 3 Na(+)(in) + H(+)(in). It catalyses the reaction K(+)(in) + L-aspartate(out) + 3 Na(+)(out) + H(+)(out) = K(+)(out) + L-aspartate(in) + 3 Na(+)(in) + H(+)(in). The catalysed reaction is D-aspartate(out) + K(+)(in) + 3 Na(+)(out) + H(+)(out) = D-aspartate(in) + K(+)(out) + 3 Na(+)(in) + H(+)(in). Functionally, sodium-dependent, high-affinity amino acid transporter that mediates the uptake of L-glutamate and also L-aspartate and D-aspartate. Functions as a symporter that transports one amino acid molecule together with two or three Na(+) ions and one proton, in parallel with the counter-transport of one K(+) ion. Mediates Cl(-) flux that is not coupled to amino acid transport; this avoids the accumulation of negative charges due to aspartate and Na(+) symport. Plays a redundant role in the rapid removal of released glutamate from the synaptic cleft, which is essential for terminating the postsynaptic action of glutamate. This chain is Excitatory amino acid transporter 4 (Slc1a6), found in Mus musculus (Mouse).